Here is a 142-residue protein sequence, read N- to C-terminus: Small ribosomal subunit protein uS12 (142 aa).

The disordered stretch occupies residues 1-44; the sequence is MANGKYAARKLKQDRQQRRWSDSEYARRERGLGAKSDPLEGAPQ. Basic and acidic residues predominate over residues 11-32; that stretch reads LKQDRQQRRWSDSEYARRERGL.

The protein belongs to the universal ribosomal protein uS12 family. In terms of assembly, part of the 30S ribosomal subunit.

Its function is as follows. With S4 and S5 plays an important role in translational accuracy. Located at the interface of the 30S and 50S subunits. The chain is Small ribosomal subunit protein uS12 from Haloquadratum walsbyi (strain DSM 16790 / HBSQ001).